The primary structure comprises 358 residues: WD repeat-containing protein 53 (358 aa).

WD repeat units follow at residues 8 to 46 (GHSS…LGHT), 92 to 131 (VNEE…ISRS), 134 to 174 (RHSN…PLWI), 195 to 234 (LNPA…CEQE), and 239 to 278 (GHSL…EKKH). Residues 278–294 (HKSPTKHTHRKKTKRAA) show a composition bias toward basic residues. Residues 278-309 (HKSPTKHTHRKKTKRAAYTKQGGGTHASVTGE) are disordered.

This sequence belongs to the WD repeat WDR53 family.

The sequence is that of WD repeat-containing protein 53 (WDR53) from Bos taurus (Bovine).